Reading from the N-terminus, the 57-residue chain is MGEMKYVCISCNAEIAPREKSTKFPCPNCGEVEIVRCERCRKLNNPYKCPKCGFEGP.

Short sequence motifs (c(P)XCG motif) lie at residues 8–12 (CISCN), 26–30 (CPNCG), 37–41 (CERCR), and 49–53 (CPKCG). Cysteine 26 and cysteine 29 together coordinate Zn(2+). Cysteine 49 and cysteine 52 together coordinate Zn(2+).

As to quaternary structure, monomer in solution.

Its function is as follows. Zinc-binding protein that binds only one zinc ion. The chain is Zinc finger protein MJ0458.1 from Methanocaldococcus jannaschii (strain ATCC 43067 / DSM 2661 / JAL-1 / JCM 10045 / NBRC 100440) (Methanococcus jannaschii).